Reading from the N-terminus, the 596-residue chain is Elongation factor 4 (596 aa).

The region spanning 2–184 is the tr-type G domain; sequence KNIRNFSIIA…TIVKNIPSPA (183 aa). Residues 14-19 and 131-134 contribute to the GTP site; these read DHGKST and NKID.

This sequence belongs to the TRAFAC class translation factor GTPase superfamily. Classic translation factor GTPase family. LepA subfamily.

Its subcellular location is the cell inner membrane. It catalyses the reaction GTP + H2O = GDP + phosphate + H(+). Functionally, required for accurate and efficient protein synthesis under certain stress conditions. May act as a fidelity factor of the translation reaction, by catalyzing a one-codon backward translocation of tRNAs on improperly translocated ribosomes. Back-translocation proceeds from a post-translocation (POST) complex to a pre-translocation (PRE) complex, thus giving elongation factor G a second chance to translocate the tRNAs correctly. Binds to ribosomes in a GTP-dependent manner. The chain is Elongation factor 4 from Colwellia psychrerythraea (strain 34H / ATCC BAA-681) (Vibrio psychroerythus).